Reading from the N-terminus, the 943-residue chain is Isoleucine--tRNA ligase (943 aa).

Positions 58–68 (PYANGSIHIGH) match the 'HIGH' region motif. Glu-567 contributes to the L-isoleucyl-5'-AMP binding site. The 'KMSKS' region motif lies at 608–612 (KMSKS). An ATP-binding site is contributed by Lys-611. The Zn(2+) site is built by Cys-906, Cys-909, Cys-926, and Cys-929.

The protein belongs to the class-I aminoacyl-tRNA synthetase family. IleS type 1 subfamily. As to quaternary structure, monomer. Zn(2+) is required as a cofactor.

It is found in the cytoplasm. It carries out the reaction tRNA(Ile) + L-isoleucine + ATP = L-isoleucyl-tRNA(Ile) + AMP + diphosphate. Catalyzes the attachment of isoleucine to tRNA(Ile). As IleRS can inadvertently accommodate and process structurally similar amino acids such as valine, to avoid such errors it has two additional distinct tRNA(Ile)-dependent editing activities. One activity is designated as 'pretransfer' editing and involves the hydrolysis of activated Val-AMP. The other activity is designated 'posttransfer' editing and involves deacylation of mischarged Val-tRNA(Ile). The protein is Isoleucine--tRNA ligase of Pseudomonas fluorescens (strain ATCC BAA-477 / NRRL B-23932 / Pf-5).